A 443-amino-acid polypeptide reads, in one-letter code: Glutamate-1-semialdehyde 2,1-aminomutase (443 aa).

Position 281 is an N6-(pyridoxal phosphate)lysine (Lys281).

Belongs to the class-III pyridoxal-phosphate-dependent aminotransferase family. HemL subfamily. As to quaternary structure, homodimer. Pyridoxal 5'-phosphate is required as a cofactor.

The protein resides in the cytoplasm. The catalysed reaction is (S)-4-amino-5-oxopentanoate = 5-aminolevulinate. Its pathway is porphyrin-containing compound metabolism; protoporphyrin-IX biosynthesis; 5-aminolevulinate from L-glutamyl-tRNA(Glu): step 2/2. In Leptospira interrogans serogroup Icterohaemorrhagiae serovar Lai (strain 56601), this protein is Glutamate-1-semialdehyde 2,1-aminomutase.